We begin with the raw amino-acid sequence, 381 residues long: Metacaspase-8 (381 aa).

Catalysis depends on residues H86 and C140. The residue at position 140 (C140) is an S-nitrosocysteine.

Belongs to the peptidase C14B family. In terms of processing, proteolytically processed; by an autocatalytic mechanism.

Its function is as follows. Cysteine protease that cleaves specifically after arginine residues. Does not cleave caspase-specific substrates. May be involved in the modulation of programmed cell death activated by oxidative stress. In Arabidopsis thaliana (Mouse-ear cress), this protein is Metacaspase-8 (AMC8).